The following is a 143-amino-acid chain: MSTKKVYSFLSQAFIFSAIMLISNIIATHLPIPMPSSVIGLVILFSLLCLKVIKLEQVESLGTALTGIIGFLFVPSGISVINSLGVMGQYFVQILTVIVVATVILLAVTGLFAQFILGKDKKETEDTKELKVVNKGRKHGKVA.

Helical transmembrane passes span 6–26 (VYSFLSQAFIFSAIMLISNII), 30–50 (LPIPMPSSVIGLVILFSLLCL), 61–81 (LGTALTGIIGFLFVPSGISVI), and 97–117 (VIVVATVILLAVTGLFAQFIL).

Belongs to the CidA/LrgA family. LrgA subfamily.

It is found in the cell membrane. Functionally, inhibits the expression or activity of extracellular murein hydrolases by interacting, possibly with LrgB, with the holin-like protein CidA. The LrgAB and CidA proteins may affect the proton motive force of the membrane. May be involved in programmed cell death (PCD), possibly triggering PCD in response to antibiotics and environmental stresses. The chain is Antiholin-like protein LrgA from Bacillus cereus (strain AH187).